We begin with the raw amino-acid sequence, 663 residues long: General transcription and DNA repair factor IIH subunit tcf-29 (663 aa).

BSD domains lie at 147-206 and 227-278; these read WFED…RAYA and ENGE…LSKK. Disordered regions lie at residues 452-491 and 513-535; these read DSDGRGGIDLHRSIGVDPDSDDEGNNSLDSKSGPKPQHVG and HLTTTTTHGGSHTTTTNASEERP. The segment covering 453-465 has biased composition (basic and acidic residues); sequence SDGRGGIDLHRSI. Residues 515-528 are compositionally biased toward low complexity; the sequence is TTTTTHGGSHTTTT.

It belongs to the TFB1 family. Component of the 7-subunit TFIIH core complex composed of XPB/rad25, XPD/dnr-10, tcf-30/SSL1, tcf-29/TFB1, tcf-11/TFB2, tcf-14/TFB4 and rtf-1/TFB5, which is active in NER. The core complex associates with the 3-subunit CTD-kinase module TFIIK composed of div-66/cyclin H, prk-3/KIN28 and rtf-2/TFB3 to form the 10-subunit holoenzyme (holo-TFIIH) active in transcription.

The protein resides in the nucleus. Component of the general transcription and DNA repair factor IIH (TFIIH) core complex, which is involved in general and transcription-coupled nucleotide excision repair (NER) of damaged DNA and, when complexed to TFIIK, in RNA transcription by RNA polymerase II. In NER, TFIIH acts by opening DNA around the lesion to allow the excision of the damaged oligonucleotide and its replacement by a new DNA fragment. In transcription, TFIIH has an essential role in transcription initiation. When the pre-initiation complex (PIC) has been established, TFIIH is required for promoter opening and promoter escape. Phosphorylation of the C-terminal tail (CTD) of the largest subunit of RNA polymerase II by the kinase module TFIIK controls the initiation of transcription. The sequence is that of General transcription and DNA repair factor IIH subunit tcf-29 (tcf-29) from Neurospora crassa (strain ATCC 24698 / 74-OR23-1A / CBS 708.71 / DSM 1257 / FGSC 987).